Here is a 327-residue protein sequence, read N- to C-terminus: MRVLGIETSCDETAVAVLDDGKNVVVNFTVSQIEVHQKFGGVVPEVAARHHLKNLPILLKKAFEKVPPETVDVVAATYGPGLIGALLVGLSAAKGLAISLEKPFVGVNHVEAHVQAVFLANPDLKPPLVVLMVSGGHTQLMKVDEDYSMEVLGETLDDSAGEAFDKVARLLGLGYPGGPVIDRVAKKGDPEKYSFPRPMLDDDSYNFSFAGLKTSVLYFLQREKGYKVEDVAASFQKAVVDILVEKTFRLARNLGIRKIAFVGGVAANSMLREEVRKRAERWNYEVFFPPLELCTDNALMVAKAGYEKAKRGMFSPLSLNADPNLNV.

Fe cation contacts are provided by His109 and His113. Residues 132-136, Asp165, Gly178, Asp182, and Asn268 contribute to the substrate site; that span reads MVSGG. Position 296 (Asp296) interacts with Fe cation.

This sequence belongs to the KAE1 / TsaD family. In terms of assembly, forms a hexamer composed of two TsaB, TsaD and TsaE trimers. The cofactor is Fe(2+).

It localises to the cytoplasm. It carries out the reaction L-threonylcarbamoyladenylate + adenosine(37) in tRNA = N(6)-L-threonylcarbamoyladenosine(37) in tRNA + AMP + H(+). In terms of biological role, required for the formation of a threonylcarbamoyl group on adenosine at position 37 (t(6)A37) in tRNAs that read codons beginning with adenine. Is involved in the transfer of the threonylcarbamoyl moiety of threonylcarbamoyl-AMP (TC-AMP) to the N6 group of A37, together with TsaE and TsaB. TsaD likely plays a direct catalytic role in this reaction. This Thermotoga maritima (strain ATCC 43589 / DSM 3109 / JCM 10099 / NBRC 100826 / MSB8) protein is tRNA N6-adenosine threonylcarbamoyltransferase.